The following is a 235-amino-acid chain: Aspartate/glutamate leucyltransferase (235 aa).

Belongs to the R-transferase family. Bpt subfamily.

It is found in the cytoplasm. It carries out the reaction N-terminal L-glutamyl-[protein] + L-leucyl-tRNA(Leu) = N-terminal L-leucyl-L-glutamyl-[protein] + tRNA(Leu) + H(+). The catalysed reaction is N-terminal L-aspartyl-[protein] + L-leucyl-tRNA(Leu) = N-terminal L-leucyl-L-aspartyl-[protein] + tRNA(Leu) + H(+). Its function is as follows. Functions in the N-end rule pathway of protein degradation where it conjugates Leu from its aminoacyl-tRNA to the N-termini of proteins containing an N-terminal aspartate or glutamate. The protein is Aspartate/glutamate leucyltransferase of Stutzerimonas stutzeri (strain A1501) (Pseudomonas stutzeri).